A 95-amino-acid chain; its full sequence is Small ribosomal subunit protein uS19 (95 aa).

Residues 76-95 are disordered; it reads PTRRFGGHADKKAKKGELKK. A compositionally biased stretch (basic and acidic residues) spans 82–95; sequence GHADKKAKKGELKK.

It belongs to the universal ribosomal protein uS19 family.

Its function is as follows. Protein S19 forms a complex with S13 that binds strongly to the 16S ribosomal RNA. This Thermotoga neapolitana (strain ATCC 49049 / DSM 4359 / NBRC 107923 / NS-E) protein is Small ribosomal subunit protein uS19.